Consider the following 24-residue polypeptide: Formate ester dehydrogenase gamma chain (24 aa).

Heterotrimer composed of an alpha, a beta and a gamma chain.

In Amycolatopsis methanolica, this protein is Formate ester dehydrogenase gamma chain.